Here is a 419-residue protein sequence, read N- to C-terminus: 3-isopropylmalate dehydratase large subunit (419 aa).

[4Fe-4S] cluster-binding residues include Cys-302, Cys-362, and Cys-365.

This sequence belongs to the aconitase/IPM isomerase family. LeuC type 2 subfamily. As to quaternary structure, heterodimer of LeuC and LeuD. It depends on [4Fe-4S] cluster as a cofactor.

The enzyme catalyses (2R,3S)-3-isopropylmalate = (2S)-2-isopropylmalate. The protein operates within amino-acid biosynthesis; L-leucine biosynthesis; L-leucine from 3-methyl-2-oxobutanoate: step 2/4. In terms of biological role, catalyzes the isomerization between 2-isopropylmalate and 3-isopropylmalate, via the formation of 2-isopropylmaleate. The protein is 3-isopropylmalate dehydratase large subunit of Sulfurimonas denitrificans (strain ATCC 33889 / DSM 1251) (Thiomicrospira denitrificans (strain ATCC 33889 / DSM 1251)).